A 578-amino-acid polypeptide reads, in one-letter code: Aspartate--tRNA ligase (578 aa).

E169 provides a ligand contact to L-aspartate. The segment at 191–194 (QTFK) is aspartate. L-aspartate is bound at residue R213. Residues 213–215 (RDE) and Q222 contribute to the ATP site. Residue H440 coordinates L-aspartate. E474 is an ATP binding site. R481 contributes to the L-aspartate binding site. 526–529 (GLDR) provides a ligand contact to ATP.

This sequence belongs to the class-II aminoacyl-tRNA synthetase family. Type 1 subfamily. In terms of assembly, homodimer.

Its subcellular location is the cytoplasm. It carries out the reaction tRNA(Asp) + L-aspartate + ATP = L-aspartyl-tRNA(Asp) + AMP + diphosphate. Catalyzes the attachment of L-aspartate to tRNA(Asp) in a two-step reaction: L-aspartate is first activated by ATP to form Asp-AMP and then transferred to the acceptor end of tRNA(Asp). This is Aspartate--tRNA ligase from Ureaplasma parvum serovar 3 (strain ATCC 700970).